We begin with the raw amino-acid sequence, 226 residues long: Ribonuclease 3 (226 aa).

An RNase III domain is found at 6–128 (TNRLQKKLGY…LIGGVFLDSD (123 aa)). Position 41 (E41) interacts with Mg(2+). Residue D45 is part of the active site. D114 and E117 together coordinate Mg(2+). E117 is an active-site residue. A DRBM domain is found at 155-225 (DPKTRLQEYL…AEQALKLLEL (71 aa)).

Belongs to the ribonuclease III family. As to quaternary structure, homodimer. The cofactor is Mg(2+).

The protein resides in the cytoplasm. The catalysed reaction is Endonucleolytic cleavage to 5'-phosphomonoester.. In terms of biological role, digests double-stranded RNA. Involved in the processing of primary rRNA transcript to yield the immediate precursors to the large and small rRNAs (23S and 16S). Processes some mRNAs, and tRNAs when they are encoded in the rRNA operon. Processes pre-crRNA and tracrRNA of type II CRISPR loci if present in the organism. This Sodalis glossinidius (strain morsitans) protein is Ribonuclease 3.